We begin with the raw amino-acid sequence, 243 residues long: Pyridoxine 5'-phosphate synthase (243 aa).

Asparagine 9 contributes to the 3-amino-2-oxopropyl phosphate binding site. A 1-deoxy-D-xylulose 5-phosphate-binding site is contributed by 11–12; sequence DH. A 3-amino-2-oxopropyl phosphate-binding site is contributed by arginine 20. Histidine 45 (proton acceptor) is an active-site residue. Arginine 47 and histidine 52 together coordinate 1-deoxy-D-xylulose 5-phosphate. Glutamate 72 (proton acceptor) is an active-site residue. 1-deoxy-D-xylulose 5-phosphate is bound at residue threonine 102. Catalysis depends on histidine 193, which acts as the Proton donor. Residues glycine 194 and 215–216 each bind 3-amino-2-oxopropyl phosphate; that span reads GH.

The protein belongs to the PNP synthase family. Homooctamer; tetramer of dimers.

Its subcellular location is the cytoplasm. The enzyme catalyses 3-amino-2-oxopropyl phosphate + 1-deoxy-D-xylulose 5-phosphate = pyridoxine 5'-phosphate + phosphate + 2 H2O + H(+). The protein operates within cofactor biosynthesis; pyridoxine 5'-phosphate biosynthesis; pyridoxine 5'-phosphate from D-erythrose 4-phosphate: step 5/5. Catalyzes the complicated ring closure reaction between the two acyclic compounds 1-deoxy-D-xylulose-5-phosphate (DXP) and 3-amino-2-oxopropyl phosphate (1-amino-acetone-3-phosphate or AAP) to form pyridoxine 5'-phosphate (PNP) and inorganic phosphate. The chain is Pyridoxine 5'-phosphate synthase from Aliivibrio fischeri (strain ATCC 700601 / ES114) (Vibrio fischeri).